Here is a 96-residue protein sequence, read N- to C-terminus: DNA-binding protein HmvA (96 aa).

An interaction with DNA region spans residues 52 to 55; it reads KTIK.

Belongs to the archaeal histone HMF family. Homodimer. Dimers then assemble into higher oligomers, with the DNA wrapped around the protein core.

It localises to the cytoplasm. The protein localises to the chromosome. Its function is as follows. Binds and compact DNA (95 to 150 base pairs) to form nucleosome-like structures that contain positive DNA supercoils. Increases the resistance of DNA to thermal denaturation (in vitro). This Methanocaldococcus jannaschii (strain ATCC 43067 / DSM 2661 / JAL-1 / JCM 10045 / NBRC 100440) (Methanococcus jannaschii) protein is DNA-binding protein HmvA (hmvA).